Here is a 371-residue protein sequence, read N- to C-terminus: Bifunctional enzyme IspD/IspF (371 aa).

The 2-C-methyl-D-erythritol 4-phosphate cytidylyltransferase stretch occupies residues 1 to 212 (MKDITLVLLA…FDFTPASGTI (212 aa)). Residues 213–371 (FTGNGFDVHA…NLGYFDWRKF (159 aa)) form a 2-C-methyl-D-erythritol 2,4-cyclodiphosphate synthase region. A divalent metal cation-binding residues include aspartate 219 and histidine 221. 4-CDP-2-C-methyl-D-erythritol 2-phosphate-binding positions include 219-221 (DVH) and 245-246 (HS). Histidine 253 is an a divalent metal cation binding site. Residues 267–269 (DIG), 272–276 (FPDTD), 341–344 (STTE), phenylalanine 348, and arginine 351 each bind 4-CDP-2-C-methyl-D-erythritol 2-phosphate.

This sequence in the N-terminal section; belongs to the IspD/TarI cytidylyltransferase family. IspD subfamily. It in the C-terminal section; belongs to the IspF family. A divalent metal cation serves as cofactor.

It catalyses the reaction 2-C-methyl-D-erythritol 4-phosphate + CTP + H(+) = 4-CDP-2-C-methyl-D-erythritol + diphosphate. It carries out the reaction 4-CDP-2-C-methyl-D-erythritol 2-phosphate = 2-C-methyl-D-erythritol 2,4-cyclic diphosphate + CMP. It functions in the pathway isoprenoid biosynthesis; isopentenyl diphosphate biosynthesis via DXP pathway; isopentenyl diphosphate from 1-deoxy-D-xylulose 5-phosphate: step 2/6. It participates in isoprenoid biosynthesis; isopentenyl diphosphate biosynthesis via DXP pathway; isopentenyl diphosphate from 1-deoxy-D-xylulose 5-phosphate: step 4/6. In terms of biological role, bifunctional enzyme that catalyzes the formation of 4-diphosphocytidyl-2-C-methyl-D-erythritol from CTP and 2-C-methyl-D-erythritol 4-phosphate (MEP) (IspD), and catalyzes the conversion of 4-diphosphocytidyl-2-C-methyl-D-erythritol 2-phosphate (CDP-ME2P) to 2-C-methyl-D-erythritol 2,4-cyclodiphosphate (ME-CPP) with a corresponding release of cytidine 5-monophosphate (CMP) (IspF). In Campylobacter hominis (strain ATCC BAA-381 / DSM 21671 / CCUG 45161 / LMG 19568 / NCTC 13146 / CH001A), this protein is Bifunctional enzyme IspD/IspF.